A 429-amino-acid polypeptide reads, in one-letter code: Glutamate-1-semialdehyde 2,1-aminomutase 2 (429 aa).

N6-(pyridoxal phosphate)lysine is present on Lys268.

Belongs to the class-III pyridoxal-phosphate-dependent aminotransferase family. HemL subfamily. In terms of assembly, homodimer. The cofactor is pyridoxal 5'-phosphate.

Its subcellular location is the cytoplasm. The catalysed reaction is (S)-4-amino-5-oxopentanoate = 5-aminolevulinate. It functions in the pathway porphyrin-containing compound metabolism; protoporphyrin-IX biosynthesis; 5-aminolevulinate from L-glutamyl-tRNA(Glu): step 2/2. The protein is Glutamate-1-semialdehyde 2,1-aminomutase 2 of Bacillus cereus (strain AH187).